The chain runs to 258 residues: Tryptophan synthase alpha chain (258 aa).

Active-site proton acceptor residues include E52 and D63.

Belongs to the TrpA family. In terms of assembly, tetramer of two alpha and two beta chains.

The enzyme catalyses (1S,2R)-1-C-(indol-3-yl)glycerol 3-phosphate + L-serine = D-glyceraldehyde 3-phosphate + L-tryptophan + H2O. The protein operates within amino-acid biosynthesis; L-tryptophan biosynthesis; L-tryptophan from chorismate: step 5/5. Functionally, the alpha subunit is responsible for the aldol cleavage of indoleglycerol phosphate to indole and glyceraldehyde 3-phosphate. This chain is Tryptophan synthase alpha chain, found in Streptococcus pneumoniae serotype 19F (strain G54).